We begin with the raw amino-acid sequence, 453 residues long: MARETFPFTSSMLRSLRLQQEWLEWEDRRRAAAQQCRSRRCPSSPRARLTRPHRSCRDPAVHQALFSGNLQQVQALFQDEEAANMIVETVSNQLAWSAEQGFWVLTPKTKQTAPLAIATARGYTDCARHLIRQGAELDARVGGRAALHEACARAQFDCVRLLLTFGAKANVLTEEGTTPLHLCTIPESLQCAKLLLEAGATVNLAAGESQETPLHVAAARGLEQHVALYLEHGADVGLRTSQGETALNTACAGAEGPGSCRRHQAAARRLLEAGADARAAGRKRHTPLHNACANGCGGLAELLLRYGARAEVPNGAGHTPMDCALQAVQDSPNWEPEVLFAALLDYGAQPVRPEMLKHCANFPRALEVLLNAYPCVPSCETWVEAVLPELWKEHEAFYSSALCMVNQPRQLQHLARLAVRARLGSRCRQGATRLPLPPLLRDYLLLRVEGCIQ.

7 ANK repeats span residues 56 to 85, 110 to 139, 142 to 171, 175 to 204, 209 to 238, 242 to 279, and 283 to 312; these read CRDP…AANM, KQTA…ELDA, GGRA…KANV, EGTT…TVNL, SQET…DVGL, QGET…DARA, and KRHT…RAEV. One can recognise an SOCS box domain in the interval 398–450; that stretch reads YSSALCMVNQPRQLQHLARLAVRARLGSRCRQGATRLPLPPLLRDYLLLRVEG.

This sequence belongs to the ankyrin SOCS box (ASB) family.

It functions in the pathway protein modification; protein ubiquitination. May be a substrate-recognition component of a SCF-like ECS (Elongin-Cullin-SOCS-box protein) E3 ubiquitin-protein ligase complex which mediates the ubiquitination and subsequent proteasomal degradation of target proteins. This Homo sapiens (Human) protein is Ankyrin repeat and SOCS box protein 16 (ASB16).